We begin with the raw amino-acid sequence, 399 residues long: A-type ATP synthase subunit C (399 aa).

Belongs to the V-ATPase V0D/AC39 subunit family. As to quaternary structure, the A-type ATPase is composed of subunits A(3), B(3), C, D, E(1 or 2), F, H(2), I and K(x).

It localises to the cell membrane. Its function is as follows. Component of the A-type ATP synthase that produces ATP from ADP in the presence of a proton gradient across the membrane. The chain is A-type ATP synthase subunit C from Methanocaldococcus jannaschii (strain ATCC 43067 / DSM 2661 / JAL-1 / JCM 10045 / NBRC 100440) (Methanococcus jannaschii).